We begin with the raw amino-acid sequence, 380 residues long: Chaperone protein DnaJ (380 aa).

The J domain maps to 5-70 (DFYEVLGVSK…NLRARYDQYG (66 aa)). The CR-type zinc finger occupies 135 to 213 (GVSKEIKVPS…CHGEGRYQKT (79 aa)). Cysteine 148, cysteine 151, cysteine 165, cysteine 168, cysteine 187, cysteine 190, cysteine 201, and cysteine 204 together coordinate Zn(2+). CXXCXGXG motif repeat units follow at residues 148–155 (CEVCNGSG), 165–172 (CPTCHGAG), 187–194 (CPHCHGRG), and 201–208 (CRKCHGEG).

It belongs to the DnaJ family. In terms of assembly, homodimer. Requires Zn(2+) as cofactor.

Its subcellular location is the cytoplasm. Functionally, participates actively in the response to hyperosmotic and heat shock by preventing the aggregation of stress-denatured proteins and by disaggregating proteins, also in an autonomous, DnaK-independent fashion. Unfolded proteins bind initially to DnaJ; upon interaction with the DnaJ-bound protein, DnaK hydrolyzes its bound ATP, resulting in the formation of a stable complex. GrpE releases ADP from DnaK; ATP binding to DnaK triggers the release of the substrate protein, thus completing the reaction cycle. Several rounds of ATP-dependent interactions between DnaJ, DnaK and GrpE are required for fully efficient folding. Also involved, together with DnaK and GrpE, in the DNA replication of plasmids through activation of initiation proteins. The chain is Chaperone protein DnaJ from Aeromonas salmonicida (strain A449).